Reading from the N-terminus, the 187-residue chain is Choriogonadotropin subunit beta variant 1 (187 aa).

The N-terminal stretch at 1–50 (MSTFPVLAEDIPLRERHVKGRVDPHFRAPKMEMFQRLLLLLLLSMGGTWA) is a signal peptide. 6 disulfides stabilise this stretch: Cys59–Cys107, Cys73–Cys122, Cys76–Cys160, Cys84–Cys138, Cys88–Cys140, and Cys143–Cys150. Residues Asn63 and Asn80 are each glycosylated (N-linked (GlcNAc...) asparagine). Residues 161–187 (DDPRFQDSSSSKAPPPSLPSPSRLPGP) form a disordered region. Residues 173–187 (APPPSLPSPSRLPGP) show a composition bias toward pro residues.

The protein belongs to the glycoprotein hormones subunit beta family. As to expression, expressed in placenta, testis and pituitary.

It localises to the secreted. This chain is Choriogonadotropin subunit beta variant 1 (CGB1), found in Homo sapiens (Human).